Here is a 540-residue protein sequence, read N- to C-terminus: Chaperonin GroEL (540 aa).

ATP contacts are provided by residues 29–32, 86–90, Gly-413, and Asp-493; these read TLGP and DGTTT. A disordered region spans residues 520–540; sequence AEKPEPKPAPGPADPGAGMDF.

Belongs to the chaperonin (HSP60) family. In terms of assembly, forms a cylinder of 14 subunits composed of two heptameric rings stacked back-to-back. Interacts with the co-chaperonin GroES.

The protein localises to the cytoplasm. It catalyses the reaction ATP + H2O + a folded polypeptide = ADP + phosphate + an unfolded polypeptide.. In terms of biological role, together with its co-chaperonin GroES, plays an essential role in assisting protein folding. The GroEL-GroES system forms a nano-cage that allows encapsulation of the non-native substrate proteins and provides a physical environment optimized to promote and accelerate protein folding. The chain is Chaperonin GroEL from Tropheryma whipplei (strain TW08/27) (Whipple's bacillus).